The chain runs to 494 residues: Probable cytosol aminopeptidase (494 aa).

Residues Lys-260 and Asp-265 each contribute to the Mn(2+) site. Residue Lys-272 is part of the active site. Mn(2+)-binding residues include Asp-283, Asp-342, and Glu-344. The active site involves Arg-346.

The protein belongs to the peptidase M17 family. Requires Mn(2+) as cofactor.

It is found in the cytoplasm. It carries out the reaction Release of an N-terminal amino acid, Xaa-|-Yaa-, in which Xaa is preferably Leu, but may be other amino acids including Pro although not Arg or Lys, and Yaa may be Pro. Amino acid amides and methyl esters are also readily hydrolyzed, but rates on arylamides are exceedingly low.. It catalyses the reaction Release of an N-terminal amino acid, preferentially leucine, but not glutamic or aspartic acids.. Its function is as follows. Presumably involved in the processing and regular turnover of intracellular proteins. Catalyzes the removal of unsubstituted N-terminal amino acids from various peptides. In Bacillus mycoides (strain KBAB4) (Bacillus weihenstephanensis), this protein is Probable cytosol aminopeptidase.